The chain runs to 90 residues: Progonadoliberin-3 (90 aa).

Residues 1–23 (MEASSRVTVQVLLLALVVQVTLS) form the signal peptide. Residue Q24 is modified to Pyrrolidone carboxylic acid. Residue G33 is modified to Glycine amide.

The protein belongs to the GnRH family.

The protein localises to the secreted. Stimulates the secretion of gonadotropins. The polypeptide is Progonadoliberin-3 (gnrh3) (Pagrus major (Red sea bream)).